Consider the following 578-residue polypeptide: Forkhead box protein P1 (578 aa).

A C2H2-type zinc finger spans residues 208–233 (GVCKWPGCETICEDFPSFLKHLNSEH). The tract at residues 250–271 (VQQLELQLSKDKERLQAMMSHL) is leucine-zipper. The segment at 284–288 (PLNLV) is ctbp1-binding. Positions 293-305 (LSKTASEASPQSL) are enriched in polar residues. A disordered region spans residues 293-325 (LSKTASEASPQSLPHTPTTPTAPLTPITQGPSV). Residues 306 to 320 (PHTPTTPTAPLTPIT) show a composition bias toward low complexity. Residues 366–456 (RPPFTYASLI…PQKISGSPTL (91 aa)) constitute a DNA-binding region (fork-head). A disordered region spans residues 511–578 (MEHTSSNGSD…EDDPVNDDME (68 aa)). The span at 515 to 527 (SSNGSDSSPGRSP) shows a compositional bias: low complexity. The span at 568-578 (YEDDPVNDDME) shows a compositional bias: acidic residues.

In terms of assembly, dimerization is required for DNA-binding. Isoform a, but not isoform b, interacts with ctbp1. As to expression, all isoforms show similar spatial expression. Localized to the animal hemisphere of early cleavage stage embryos. At tailbud stages, expressed in regions of the brain, eye and the splanchnic mesodermal layer of the lateral plate mesoderm surrounding the gut. At stage 35, expressed within the lens of the eye, in distinct regions of the head mesenchyme and in the area anterior to the gut. In the brain the anterior-most expression is restricted to the outer region of the mesencephalon. With ongoing development, additional expression is found in the curling gut.

It is found in the nucleus. Functionally, transcriptional repressor. In Xenopus laevis (African clawed frog), this protein is Forkhead box protein P1.